Here is a 325-residue protein sequence, read N- to C-terminus: H-2 class I histocompatibility antigen, Q10 alpha chain (325 aa).

The N-terminal stretch at 1–24 (MGAMAPRTLLLLLAAALAPTQTQA) is a signal peptide. Residues 25–114 (GSHSMRYFET…LLGYYNQSES (90 aa)) are alpha-1. The Extracellular segment spans residues 25 to 310 (GSHSMRYFET…PPSTDSIMSH (286 aa)). N-linked (GlcNAc...) asparagine glycosylation is present at asparagine 110. Residues 115–206 (GSHTIQWMYG…ELGKETLLRT (92 aa)) form an alpha-2 region. Cystine bridges form between cysteine 125–cysteine 188 and cysteine 227–cysteine 283. Positions 207–298 (DPPKTHVTHH…GLPEPLTLRW (92 aa)) are alpha-3. Residues 209–297 (PKTHVTHHPG…EGLPEPLTLR (89 aa)) enclose the Ig-like C1-type domain. N-linked (GlcNAc...) asparagine glycosylation occurs at asparagine 280. A connecting peptide region spans residues 299-310 (EPPPSTDSIMSH). Residues 311 to 324 (IADLLWPSLKLWWY) traverse the membrane as a helical segment.

Belongs to the MHC class I family. Heterodimer of an alpha chain and a beta chain (beta-2-microglobulin).

The protein resides in the membrane. In terms of biological role, involved in the presentation of foreign antigens to the immune system. The polypeptide is H-2 class I histocompatibility antigen, Q10 alpha chain (H2-Q10) (Mus musculus (Mouse)).